The sequence spans 611 residues: MSHYRSNVRDQVFNLFEVLGVDKALGHGEFSDVDVDTARDMLAEVSRLAEGPVAESFVEGDRNPPVFDPKTHSVMLPESFKKSVNAMLEAGWDKVGIDEALGGMPMPKAVVWALHEHILGANPAVWMYAGGAGFAQILYHLGTEEQKKWAVLAAERGWGSTMVLTEPDAGSDVGAARTKAVQQADGSWHIDGVKRFITSGDSGDLFENIFHLVLARPEGAGPGTKGLSLYFVPKFLFDVETGEPGERNGVFVTNVEHKMGLKVSATCELAFGQHGVPAKGWLVGEVHNGIAQMFEVIEQARMMVGTKAIATLSTGYLNALQYAKSRVQGADLTQMTDKTAPRVTITHHPDVRRSLMTQKAYAEGLRALYLYTATFQDAAVAEVVHGVDAKLAVKVNDLMLPVVKGVGSEQAYAKLTESLQTLGGSGFLQDYPIEQYIRDAKIDSLYEGTTAIQAQDFFFRKIVRDKGVALAHVSGQIQEFVDSGAGNGRLKTERALLAKALTDVQGMAAALTGYLMAAQQDVTSLYKVGLGSVRFLMSVGDLIIGWLLQRQAAVAVAALDAGATGDERSFYEGKVAVASFFAKNFLPLLTSTREVIETLDNDIMELDEAAF.

Residues 162 to 165, S171, and T198 each bind FAD; that span reads MVLT. An a 2,3-saturated acyl-CoA-binding site is contributed by S171. A 2,3-saturated acyl-CoA contacts are provided by residues 224-225 and R301; that span reads TK. Residue R326 participates in FAD binding. K338 lines the a 2,3-saturated acyl-CoA pocket. Position 420–424 (420–424) interacts with FAD; sequence QTLGG. E447 lines the a 2,3-saturated acyl-CoA pocket. E447 acts as the Proton acceptor in catalysis. T449 is a binding site for FAD. Residues D456 and 460 to 461 contribute to the a 2,3-saturated acyl-CoA site; that span reads RK.

It belongs to the acyl-CoA dehydrogenase family. Homodimer. It depends on FAD as a cofactor.

The catalysed reaction is a long-chain 2,3-saturated fatty acyl-CoA + oxidized [electron-transfer flavoprotein] + H(+) = a long-chain (2E)-enoyl-CoA + reduced [electron-transfer flavoprotein]. It catalyses the reaction a medium-chain 2,3-saturated fatty acyl-CoA + oxidized [electron-transfer flavoprotein] + H(+) = a medium-chain (2E)-enoyl-CoA + reduced [electron-transfer flavoprotein]. It carries out the reaction a short-chain 2,3-saturated fatty acyl-CoA + oxidized [electron-transfer flavoprotein] + H(+) = a short-chain (2E)-enoyl-CoA + reduced [electron-transfer flavoprotein]. The enzyme catalyses octadecanoyl-CoA + oxidized [electron-transfer flavoprotein] + H(+) = (2E)-octadecenoyl-CoA + reduced [electron-transfer flavoprotein]. The catalysed reaction is oxidized [electron-transfer flavoprotein] + hexadecanoyl-CoA + H(+) = (2E)-hexadecenoyl-CoA + reduced [electron-transfer flavoprotein]. It catalyses the reaction dodecanoyl-CoA + oxidized [electron-transfer flavoprotein] + H(+) = (2E)-dodecenoyl-CoA + reduced [electron-transfer flavoprotein]. It carries out the reaction decanoyl-CoA + oxidized [electron-transfer flavoprotein] + H(+) = (2E)-decenoyl-CoA + reduced [electron-transfer flavoprotein]. The enzyme catalyses hexanoyl-CoA + oxidized [electron-transfer flavoprotein] + H(+) = (2E)-hexenoyl-CoA + reduced [electron-transfer flavoprotein]. The catalysed reaction is butanoyl-CoA + oxidized [electron-transfer flavoprotein] + H(+) = (2E)-butenoyl-CoA + reduced [electron-transfer flavoprotein]. The protein operates within lipid metabolism; fatty acid metabolism. Acyl-CoA dehydrogenase that exhibits broad specificity for linear acyl-CoA substrates, with a preference for long-chain substrates. This is Broad-specificity linear acyl-CoA dehydrogenase FadE5 from Mycobacterium tuberculosis (strain ATCC 25618 / H37Rv).